The sequence spans 190 residues: Ion-translocating oxidoreductase complex subunit B (190 aa).

Positions 1-26 (MTALWIAIAALSALGLLFGLVLGYAA) are hydrophobic. The 59-residue stretch at 32 to 90 (EEDPVAEQVDEILPQSQCGQCGYPGCRPYAEAVANGEMINKCAPGGEQVMLKLAELLNV) folds into the 4Fe-4S domain. Residues cysteine 49, cysteine 52, cysteine 57, cysteine 73, cysteine 115, cysteine 118, cysteine 121, cysteine 125, cysteine 145, cysteine 148, cysteine 151, and cysteine 155 each contribute to the [4Fe-4S] cluster site. 4Fe-4S ferredoxin-type domains are found at residues 106-135 (QVAYIDEANCIGCTKCIQACPVDAIVGATR) and 136-165 (AMHTVITDLCTGCDLCVAPCPTDCIEMRPV).

Belongs to the 4Fe4S bacterial-type ferredoxin family. RnfB subfamily. As to quaternary structure, the complex is composed of six subunits: RnfA, RnfB, RnfC, RnfD, RnfE and RnfG. [4Fe-4S] cluster is required as a cofactor.

It is found in the cell inner membrane. Its function is as follows. Part of a membrane-bound complex that couples electron transfer with translocation of ions across the membrane. The sequence is that of Ion-translocating oxidoreductase complex subunit B from Serratia proteamaculans (strain 568).